The primary structure comprises 223 residues: Probable transaldolase (223 aa).

The Schiff-base intermediate with substrate role is filled by K83.

The protein belongs to the transaldolase family. Type 3B subfamily.

Its subcellular location is the cytoplasm. It catalyses the reaction D-sedoheptulose 7-phosphate + D-glyceraldehyde 3-phosphate = D-erythrose 4-phosphate + beta-D-fructose 6-phosphate. It participates in carbohydrate degradation; pentose phosphate pathway; D-glyceraldehyde 3-phosphate and beta-D-fructose 6-phosphate from D-ribose 5-phosphate and D-xylulose 5-phosphate (non-oxidative stage): step 2/3. Functionally, transaldolase is important for the balance of metabolites in the pentose-phosphate pathway. This is Probable transaldolase from Myxococcus xanthus (strain DK1622).